We begin with the raw amino-acid sequence, 506 residues long: Maturase K (506 aa).

This sequence belongs to the intron maturase 2 family. MatK subfamily.

It localises to the plastid. Its subcellular location is the chloroplast. Its function is as follows. Usually encoded in the trnK tRNA gene intron. Probably assists in splicing its own and other chloroplast group II introns. The sequence is that of Maturase K from Trifolium fragiferum (Strawberry clover).